The chain runs to 323 residues: Methenyltetrahydromethanopterin cyclohydrolase (323 aa).

Belongs to the MCH family.

The protein localises to the cytoplasm. It carries out the reaction 5,10-methenyl-5,6,7,8-tetrahydromethanopterin + H2O = N(5)-formyl-5,6,7,8-tetrahydromethanopterin + H(+). The protein operates within one-carbon metabolism; methanogenesis from CO(2); 5,10-methenyl-5,6,7,8-tetrahydromethanopterin from CO(2): step 3/3. In terms of biological role, catalyzes the reversible interconversion of 5-formyl-H(4)MPT to methenyl-H(4)MPT(+). The chain is Methenyltetrahydromethanopterin cyclohydrolase from Methanococcus vannielii (strain ATCC 35089 / DSM 1224 / JCM 13029 / OCM 148 / SB).